Reading from the N-terminus, the 76-residue chain is Translational regulator CsrA (76 aa).

Belongs to the CsrA/RsmA family. In terms of assembly, homodimer; the beta-strands of each monomer intercalate to form a hydrophobic core, while the alpha-helices form wings that extend away from the core.

The protein localises to the cytoplasm. A translational regulator that binds mRNA to regulate translation initiation and/or mRNA stability. Usually binds in the 5'-UTR at or near the Shine-Dalgarno sequence preventing ribosome-binding, thus repressing translation. Its main target seems to be the major flagellin gene, while its function is anatagonized by FliW. The polypeptide is Translational regulator CsrA (Pseudothermotoga lettingae (strain ATCC BAA-301 / DSM 14385 / NBRC 107922 / TMO) (Thermotoga lettingae)).